We begin with the raw amino-acid sequence, 282 residues long: sn-glycerol-3-phosphate transport system permease protein UgpE (282 aa).

The next 6 helical transmembrane spans lie at 14 to 34 (LMLIIGIIIVVFPIYYTFVAS), 86 to 106 (IAIAVGKIVISFLSAFAIVFF), 112 to 132 (MAFFWMIFITLMLPVEVRILP), 136 to 156 (VIVDLGLIDTYAGLTLPLMAS), 201 to 221 (IAALFVILFIYGWTQYLWPLL), and 248 to 268 (WNYVMVTAILAIIPPVAVVVL). The 192-residue stretch at 78-269 (LFNTFVVAIA…IPPVAVVVLM (192 aa)) folds into the ABC transmembrane type-1 domain.

The protein belongs to the binding-protein-dependent transport system permease family. As to quaternary structure, the complex is composed of two ATP-binding proteins (UgpC), two transmembrane proteins (UgpA and UgpE) and a solute-binding protein (UgpB).

The protein resides in the cell inner membrane. Part of the ABC transporter complex UgpBAEC involved in sn-glycerol-3-phosphate (G3P) import. Probably responsible for the translocation of the substrate across the membrane. In Rhizobium meliloti (strain 1021) (Ensifer meliloti), this protein is sn-glycerol-3-phosphate transport system permease protein UgpE (ugpE).